A 494-amino-acid chain; its full sequence is Neuronal acetylcholine receptor subunit alpha-6 (494 aa).

The first 31 residues, 1–31 (MHPKRRLCWCLPASGAWAFMLTSLIADTTAC), serve as a signal peptide directing secretion. Residues 32–240 (ESEERLFHKL…TYSFYIRRLP (209 aa)) are Extracellular-facing. 2 N-linked (GlcNAc...) asparagine glycosylation sites follow: asparagine 54 and asparagine 171. Cysteine 158 and cysteine 172 form a disulfide bridge. Helical transmembrane passes span 241–265 (MFYT…FYLP), 272–290 (VTLC…LVIT), and 306–327 (YLLF…VLNI). At 328 to 468 (HYRTPTTHTM…WKYVAMVIDR (141 aa)) the chain is on the cytoplasmic side. Residues 364–390 (KNISKKTKKGSAKTSGKSKHSKHKDNK) form a disordered region. The span at 366–390 (ISKKTKKGSAKTSGKSKHSKHKDNK) shows a compositional bias: basic residues. A helical transmembrane segment spans residues 469–489 (VFLWVFIILCVFGTAGLFIQP).

It belongs to the ligand-gated ion channel (TC 1.A.9) family. Acetylcholine receptor (TC 1.A.9.1) subfamily. Alpha-6/CHRNA6 sub-subfamily. In terms of assembly, neuronal AChR is composed of two different types of subunits: alpha and non-alpha (beta). CHRNA6/alpha-6 subunit can be combined to CHRNB2/beta-2, CHRNA4/alpha-4 and CHRNB3/beta-3 to give rise to functional receptors. Heteropentamers containing CHRNB3 have an stoichiometry of (CHRNA6:CHRNB2)2:CHRNB3. Interacts with LYPD6.

The protein resides in the synaptic cell membrane. The catalysed reaction is K(+)(in) = K(+)(out). The enzyme catalyses Na(+)(in) = Na(+)(out). It catalyses the reaction Ca(2+)(in) = Ca(2+)(out). With respect to regulation, activated by a myriad of ligands such as acetylcholine, cytisine and nicotine. CHRNA6 nAChR activity is inhibited by the antagonists alpha-conotoxin MII and PIA, a small disulfide-constrained peptides from cone snails. Its function is as follows. Component of neuronal acetylcholine receptors (nAChRs) that function as pentameric, ligand-gated cation channels with high calcium permeability among other activities. nAChRs are excitatory neurotrasnmitter receptors formed by a collection of nAChR subunits known to mediate synaptic transmission in the nervous system and the neuromuscular junction. Each nAchR subunit confers differential attributes to channel properties, including activation, deactivation and desensitization kinetics, pH sensitivity, cation permeability, and binding to allosteric modulators. CHRNA6 forms pentameric channels with CHRNB2 and CHRNA4 that exhibit high sensitivity to ACh and nicotine and are predominantly expressed in only a few brain areas, including dopaminergic neurons, norepirephrine neurons and cells of the visual system. nAChrs containing CHRNA6 subunits mediate endogenous cholinergic modulation of dopamine and gamma-aminobutyric acid (GABA) release in response to nicotine at nerve terminals. In terms of biological role, component of neuronal acetylcholine receptors (nAChRs) that function as pentameric, ligand-gated cation channels with high calcium permeability among other activities. nAChRs are excitatory neurotrasnmitter receptors formed by a collection of nAChR subunits known to mediate synaptic transmission in the nervous system and the neuromuscular junction. Each nAchR subunit confers differential attributes to channel properties, including activation, deactivation and desensitization kinetics, pH sensitivity, cation permeability, and binding to allosteric modulators. CHRNA6 forms pentameric channels with CHRNB2, CHRNB3 and CHRNA4 that exhibit high sensitivity to ACh and nicotine and are predominantly expressed in only a few brain areas, including dopaminergic neurons, norepirephrine neurons and cells of the visual system. nAChrs containing CHRNA6 subunits mediate endogenous cholinergic modulation of dopamine and gamma-aminobutyric acid (GABA) release in response to nicotine at nerve terminals. This is Neuronal acetylcholine receptor subunit alpha-6 (CHRNA6) from Gallus gallus (Chicken).